A 92-amino-acid polypeptide reads, in one-letter code: MKCDARYAEKYRMRPISDELGMEIDGYLGVIRKVTPELYDVFVLTYIKRWEKQGIWRYLHISRREYFNRLKTVKTSLLLLLSTEGKQYLFIA.

This is an uncharacterized protein from Haemophilus influenzae (strain ATCC 51907 / DSM 11121 / KW20 / Rd).